The primary structure comprises 102 residues: MNNYIKALLIIICFSSCSISDKNKYNLDVLEATHLNKNILNRNYVGMTRQQIVYIFGIPIISDSFDDIYHYYLSDSKNNNVYPKKMLNLYFKDNKVFKFNMT.

The N-terminal stretch at 1-20 (MNNYIKALLIIICFSSCSIS) is a signal peptide.

It belongs to the BamE family. Part of the Bam complex.

It is found in the cell outer membrane. Functionally, part of the outer membrane protein assembly complex, which is involved in assembly and insertion of beta-barrel proteins into the outer membrane. This is Outer membrane protein assembly factor BamE from Buchnera aphidicola subsp. Acyrthosiphon pisum (strain APS) (Acyrthosiphon pisum symbiotic bacterium).